The following is a 177-amino-acid chain: Flavodoxin (177 aa).

A Flavodoxin-like domain is found at 4–173 (IGIFFGSDTG…RIDTWLDKLK (170 aa)).

The protein belongs to the flavodoxin family. FMN is required as a cofactor.

Low-potential electron donor to a number of redox enzymes. NifF is the electron donor to nitrogenase. This Enterobacter agglomerans (Erwinia herbicola) protein is Flavodoxin (nifF).